A 347-amino-acid polypeptide reads, in one-letter code: Bombesin receptor-activated protein C6orf89 homolog (347 aa).

The Cytoplasmic segment spans residues 1 to 58; sequence MDLAANEISIYDKLSETVDLVRQTGHQCGMSEKAIEKFIRQLLEKNEPQRPPPQYPLL. A helical membrane pass occupies residues 59–79; it reads IVVYKVLATLGLILLTAYFVI. The Extracellular portion of the chain corresponds to 80–347; the sequence is QPFSPLAPEP…ICDGTAFSEL (268 aa).

As to quaternary structure, homodimer. Interacts with BRS3. Interacts (via N-terminus) with SIN3B. Post-translationally, glycosylated.

The protein localises to the golgi apparatus membrane. It is found in the cytoplasm. In terms of biological role, exhibits histone deacetylase (HDAC) enhancer properties. May play a role in cell cycle progression and wound repair of bronchial epithelial cells. The polypeptide is Bombesin receptor-activated protein C6orf89 homolog (Pongo abelii (Sumatran orangutan)).